A 310-amino-acid polypeptide reads, in one-letter code: Protein N-terminal asparagine amidohydrolase (310 aa).

Monomer.

Its subcellular location is the cytoplasm. The enzyme catalyses N-terminal L-asparaginyl-[protein] + H2O + H(+) = N-terminal L-aspartyl-[protein] + NH4(+). N-terminal asparagine deamidase that mediates deamidation of N-terminal asparagine residues to aspartate. Required for the ubiquitin-dependent turnover of intracellular proteins that initiate with Met-Asn. These proteins are acetylated on the retained initiator methionine and can subsequently be modified by the removal of N-acetyl methionine by acylaminoacid hydrolase (AAH). Conversion of the resulting N-terminal asparagine to aspartate by NTAN1/PNAD renders the protein susceptible to arginylation, polyubiquitination and degradation as specified by the N-end rule. This enzyme does not act on substrates with internal or C-terminal asparagines and does not act on glutamine residues in any position. The chain is Protein N-terminal asparagine amidohydrolase from Mus musculus (Mouse).